The following is a 94-amino-acid chain: Transcription factor PRE6 (94 aa).

The interval 1 to 20 is disordered; it reads MSSRRSSRSRQSGSSRISDD. The 55-residue stretch at 6 to 60 folds into the bHLH domain; the sequence is SSRSRQSGSSRISDDQISDLVSKLQHLIPELRRRRSDKVSASKVLQETCNYIRNL.

The protein belongs to the bHLH protein family. As to quaternary structure, interacts with HFR1.

The protein resides in the cytoplasm. It is found in the nucleus. Atypical and probable non DNA-binding bHLH transcription factor that regulates light-mediated responses in day light conditions by binding and inhibiting the activity of the bHLH transcription factor HFR1, a critical regulator of light signaling and shade avoidance. Forms non-functional heterodimers with HFR1, causing liberation and activation of PIF4 from the transcriptionally inactive HFR1-PIF4 complex. The chain is Transcription factor PRE6 (PRE6) from Arabidopsis thaliana (Mouse-ear cress).